A 218-amino-acid polypeptide reads, in one-letter code: Ribonuclease T (218 aa).

One can recognise an Exonuclease domain in the interval 22–196; sequence VVVDVETAGF…YDAMKTAELF (175 aa). Mg(2+)-binding residues include aspartate 25, glutamate 27, histidine 183, and aspartate 188. Histidine 183 acts as the Proton donor/acceptor in catalysis.

The protein belongs to the RNase T family. Homodimer. The cofactor is Mg(2+).

Trims short 3' overhangs of a variety of RNA species, leaving a one or two nucleotide 3' overhang. Responsible for the end-turnover of tRNA: specifically removes the terminal AMP residue from uncharged tRNA (tRNA-C-C-A). Also appears to be involved in tRNA biosynthesis. The polypeptide is Ribonuclease T (Hahella chejuensis (strain KCTC 2396)).